The following is a 237-amino-acid chain: Lysophospholipase-like protein 1 (237 aa).

Residue A2 is modified to N-acetylalanine. Active-site charge relay system residues include S124, D179, and H211.

Belongs to the AB hydrolase superfamily. AB hydrolase 2 family.

The protein localises to the cytoplasm. It is found in the cytosol. It carries out the reaction S-hexadecanoyl-L-cysteinyl-[protein] + H2O = L-cysteinyl-[protein] + hexadecanoate + H(+). In terms of biological role, palmitoyl thioesterase that catalyzes depalmitoylation of CGAS and KCNMA1. Acts as a regulator of innate immunity by mediating depalmitoylation of CGAS, thereby preventing CGAS homodimerization and cyclic GMP-AMP synthase activity. Does not exhibit phospholipase nor triacylglycerol lipase activity, able to hydrolyze only short chain substrates due to its shallow active site. This is Lysophospholipase-like protein 1 from Pongo abelii (Sumatran orangutan).